Here is a 123-residue protein sequence, read N- to C-terminus: Small ribosomal subunit protein uS12 (123 aa).

The disordered stretch occupies residues 1 to 29; it reads MPTINQLVRKGRVPQKAKSKVPAMEQNPQ. The segment covering 9-19 has biased composition (basic residues); that stretch reads RKGRVPQKAKS. Asp89 is subject to 3-methylthioaspartic acid.

This sequence belongs to the universal ribosomal protein uS12 family. In terms of assembly, part of the 30S ribosomal subunit. Contacts proteins S8 and S17. May interact with IF1 in the 30S initiation complex.

Its function is as follows. With S4 and S5 plays an important role in translational accuracy. In terms of biological role, interacts with and stabilizes bases of the 16S rRNA that are involved in tRNA selection in the A site and with the mRNA backbone. Located at the interface of the 30S and 50S subunits, it traverses the body of the 30S subunit contacting proteins on the other side and probably holding the rRNA structure together. The combined cluster of proteins S8, S12 and S17 appears to hold together the shoulder and platform of the 30S subunit. The chain is Small ribosomal subunit protein uS12 from Erythrobacter litoralis (strain HTCC2594).